The sequence spans 144 residues: Maximins 1/H1 (144 aa).

The first 18 residues, 1–18 (MNFKYIVAVSFLLASAYA), serve as a signal peptide directing secretion. Residues 19–43 (RSEENDEQSLSQRDVLEEESLREIR) constitute a propeptide that is removed on maturation. Asn-70 bears the Asparagine amide mark. A propeptide spanning residues 74-123 (TAEEHEVMKRLEAVMRDLDSLDYPEEAAERETRSFNQEEIANLFTKKEKR) is cleaved from the precursor. Leu-143 bears the Leucine amide mark.

The protein belongs to the bombinin family. Expressed by the skin glands.

It localises to the secreted. Antibacterial peptide with amphipathic alpha-helical structure that has activity against both Gram-positive and Gram-negative bacteria. Also shows antimicrobial activity against the fungus C.albicans, but not against A.flavus nor P.uticale. It has little hemolytic activity. It possess a significant cytotoxicity against tumor cell lines, but does not possess a significant anti-HIV activity. Also shows high spermicidal activity. In terms of biological role, antibacterial peptide with activity against both Gram-positive and Gram-negative bacteria. Also shows antimicrobial activity against the fungus C.albicans. In addition, shows strong hemolytic activity. This Bombina maxima (Giant fire-bellied toad) protein is Maximins 1/H1.